A 122-amino-acid chain; its full sequence is Large ribosomal subunit protein bL19 (122 aa).

Belongs to the bacterial ribosomal protein bL19 family.

In terms of biological role, this protein is located at the 30S-50S ribosomal subunit interface and may play a role in the structure and function of the aminoacyl-tRNA binding site. The chain is Large ribosomal subunit protein bL19 from Chlamydia abortus (strain DSM 27085 / S26/3) (Chlamydophila abortus).